The chain runs to 115 residues: Large ribosomal subunit protein bL19 (115 aa).

It belongs to the bacterial ribosomal protein bL19 family.

In terms of biological role, this protein is located at the 30S-50S ribosomal subunit interface and may play a role in the structure and function of the aminoacyl-tRNA binding site. This is Large ribosomal subunit protein bL19 from Klebsiella pneumoniae (strain 342).